A 178-amino-acid polypeptide reads, in one-letter code: Cytochrome b6-f complex iron-sulfur subunit 2 (178 aa).

The helical transmembrane segment at Leu17–Pro36 threads the bilayer. One can recognise a Rieske domain in the interval Gly61–Ile161. 4 residues coordinate [2Fe-2S] cluster: Cys107, His109, Cys125, and His128. An intrachain disulfide couples Cys112 to Cys127.

Belongs to the Rieske iron-sulfur protein family. In terms of assembly, the 4 large subunits of the cytochrome b6-f complex are cytochrome b6, subunit IV (17 kDa polypeptide, PetD), cytochrome f and the Rieske protein, while the 4 small subunits are PetG, PetL, PetM and PetN. The complex functions as a dimer. [2Fe-2S] cluster serves as cofactor.

Its subcellular location is the cellular thylakoid membrane. It catalyses the reaction 2 oxidized [plastocyanin] + a plastoquinol + 2 H(+)(in) = 2 reduced [plastocyanin] + a plastoquinone + 4 H(+)(out). Its function is as follows. Component of the cytochrome b6-f complex, which mediates electron transfer between photosystem II (PSII) and photosystem I (PSI), cyclic electron flow around PSI, and state transitions. This is Cytochrome b6-f complex iron-sulfur subunit 2 from Nostoc sp. (strain PCC 7120 / SAG 25.82 / UTEX 2576).